The primary structure comprises 213 residues: ATP-dependent Clp protease proteolytic subunit (213 aa).

The active-site Nucleophile is the serine 114. Histidine 139 is an active-site residue.

It belongs to the peptidase S14 family. Fourteen ClpP subunits assemble into 2 heptameric rings which stack back to back to give a disk-like structure with a central cavity, resembling the structure of eukaryotic proteasomes.

It is found in the cytoplasm. It carries out the reaction Hydrolysis of proteins to small peptides in the presence of ATP and magnesium. alpha-casein is the usual test substrate. In the absence of ATP, only oligopeptides shorter than five residues are hydrolyzed (such as succinyl-Leu-Tyr-|-NHMec, and Leu-Tyr-Leu-|-Tyr-Trp, in which cleavage of the -Tyr-|-Leu- and -Tyr-|-Trp bonds also occurs).. Cleaves peptides in various proteins in a process that requires ATP hydrolysis. Has a chymotrypsin-like activity. Plays a major role in the degradation of misfolded proteins. The protein is ATP-dependent Clp protease proteolytic subunit of Ectopseudomonas mendocina (strain ymp) (Pseudomonas mendocina).